Consider the following 101-residue polypeptide: Small ribosomal subunit protein uS14 (101 aa).

Positions Met-1–Asn-10 are enriched in basic and acidic residues. Positions Met-1–Arg-24 are disordered. Positions Asn-11 to Arg-24 are enriched in basic residues.

The protein belongs to the universal ribosomal protein uS14 family. Part of the 30S ribosomal subunit. Contacts proteins S3 and S10.

Its function is as follows. Binds 16S rRNA, required for the assembly of 30S particles and may also be responsible for determining the conformation of the 16S rRNA at the A site. The chain is Small ribosomal subunit protein uS14 from Rhodopseudomonas palustris (strain BisB18).